Reading from the N-terminus, the 584-residue chain is BEL1-like homeodomain protein 8 (584 aa).

An SR/KY domain region spans residues 266-282 (SRFLEPAQKMLEEFCIS). The tract at residues 292-317 (ESTSMEDDDDDDDNLSGFSSSSEPLE) is disordered. Positions 295 to 305 (SMEDDDDDDDN) are enriched in acidic residues. Positions 316–387 (LEPKNRLKKA…ALRTAIAEHV (72 aa)) are BELL domain. Residues 424–486 (IWRPQRGLPE…NARVRLWKPM (63 aa)) constitute a DNA-binding region (homeobox). A disordered region spans residues 503–529 (TSHNIEPSNRPNTVSSPSHEQTLTGLS).

The protein belongs to the TALE/BELL homeobox family. May form heterodimeric complex with the TALE/KNOX proteins STM and KNAT1/BP.

The protein resides in the nucleus. Its function is as follows. Required for specifying floral primordia and establishing early internode patterning events during inflorescence development. The sequence is that of BEL1-like homeodomain protein 8 (BLH8) from Arabidopsis thaliana (Mouse-ear cress).